The chain runs to 286 residues: Translocon-associated protein subunit alpha (286 aa).

Residues 1 to 21 (MRLLPRLLLLLLLVFPATVLL) form the signal peptide. Residues 22–207 (RGGPGGSLAE…EREDGLDGQT (186 aa)) are Lumenal-facing. The disordered stretch occupies residues 28 to 83 (SLAEAQDLSEDEETVEDSVIEDEDDEAEVEEDEPTDLAEDREEEDVSGEPEASPSA). Residues 34-75 (DLSEDEETVEDSVIEDEDDEAEVEEDEPTDLAEDREEEDVSG) are compositionally biased toward acidic residues. Asn-136 and Asn-191 each carry an N-linked (GlcNAc...) asparagine glycan. Residues 208 to 228 (IFMYMSLAGLGLLVVVGLHQL) traverse the membrane as a helical segment. Residues 229 to 286 (LESRNRKRPIQKVEMGTSSQNDVDMSWIPQETLNQINKASPRRLPRKRPQKRSVGSDE) lie on the Cytoplasmic side of the membrane. Ser-247 carries the post-translational modification Phosphoserine. A Phosphothreonine modification is found at Thr-260. The interval 264–286 (INKASPRRLPRKRPQKRSVGSDE) is disordered. Ser-268 is subject to Phosphoserine. The segment covering 268–279 (SPRRLPRKRPQK) has biased composition (basic residues).

Belongs to the TRAP-alpha family. In terms of assembly, heterotetramer of TRAP-alpha, TRAP-beta, TRAP-delta and TRAP-gamma. Interacts with palmitoylated calnexin (CALX), the interaction is required for efficient folding of glycosylated proteins. In terms of processing, phosphorylated in its cytoplasmic tail.

The protein resides in the endoplasmic reticulum membrane. Functionally, TRAP proteins are part of a complex whose function is to bind calcium to the ER membrane and thereby regulate the retention of ER resident proteins. May be involved in the recycling of the translocation apparatus after completion of the translocation process or may function as a membrane-bound chaperone facilitating folding of translocated proteins. The chain is Translocon-associated protein subunit alpha (SSR1) from Oryctolagus cuniculus (Rabbit).